Here is a 147-residue protein sequence, read N- to C-terminus: MSETRDLQGGKAFGLRKAQQEERINEINQQFLDDPKYSSDEDLPSKLEAFKKKYMEFDLNEDGGIDIMSLKRMMEKLGVPKTHLELKKLIMEVSSGPGETFSYSDFLKMMLGKRSAILKMILMYEEKAREQEKPTGLPAKKAISELP.

Ser2 is subject to N-acetylserine. Residue Lys11 is modified to N6-acetyllysine. Ser39 bears the Phosphoserine mark. The EF-hand 1 domain occupies 45-80 (SKLEAFKKKYMEFDLNEDGGIDIMSLKRMMEKLGVP). Residues Asp58, Asn60, and Asp62 each contribute to the Ca(2+) site. One can recognise an EF-hand 2; degenerate domain in the interval 81–115 (KTHLELKKLIMEVSSGPGETFSYSDFLKMMLGKRS). The segment at 128–147 (AREQEKPTGLPAKKAISELP) is disordered.

Post-translationally, phosphorylated on serine residues.

The protein resides in the cytoplasm. It localises to the cytoskeleton. It is found in the cell projection. The protein localises to the ruffle membrane. Its subcellular location is the phagocytic cup. Its function is as follows. May play a role in macrophage activation and function. The protein is Allograft inflammatory factor 1 (AIF1) of Bos taurus (Bovine).